A 432-amino-acid chain; its full sequence is Enolase (432 aa).

Gln167 provides a ligand contact to (2R)-2-phosphoglycerate. Catalysis depends on Glu209, which acts as the Proton donor. Mg(2+)-binding residues include Asp246, Glu287, and Asp314. (2R)-2-phosphoglycerate contacts are provided by Lys339, Arg368, Ser369, and Lys390. Lys339 acts as the Proton acceptor in catalysis.

This sequence belongs to the enolase family. Mg(2+) is required as a cofactor.

Its subcellular location is the cytoplasm. The protein resides in the secreted. It localises to the cell surface. The catalysed reaction is (2R)-2-phosphoglycerate = phosphoenolpyruvate + H2O. The protein operates within carbohydrate degradation; glycolysis; pyruvate from D-glyceraldehyde 3-phosphate: step 4/5. Catalyzes the reversible conversion of 2-phosphoglycerate (2-PG) into phosphoenolpyruvate (PEP). It is essential for the degradation of carbohydrates via glycolysis. The polypeptide is Enolase (Prochlorococcus marinus (strain SARG / CCMP1375 / SS120)).